The chain runs to 158 residues: Copper transporter 2 (158 aa).

The disordered stretch occupies residues 1-20 (MDHDHMHDMPPPSPSSSSMS). The next 2 helical transmembrane spans lie at 53–73 (GMYALCLIVIFLLAVIAEWLA) and 104–124 (YLVMLAVMSFNAGVFIVAIAG).

It belongs to the copper transporter (Ctr) (TC 1.A.56) family. SLC31A subfamily. In terms of tissue distribution, highly expressed in leaves and at lower levels in roots, stems and flowers.

Its subcellular location is the membrane. Its function is as follows. Involved in the transport of copper. The protein is Copper transporter 2 (COPT2) of Arabidopsis thaliana (Mouse-ear cress).